The following is a 283-amino-acid chain: 4-diphosphocytidyl-2-C-methyl-D-erythritol kinase (283 aa).

The active site involves lysine 10. Proline 99–serine 109 serves as a coordination point for ATP. Aspartate 141 is a catalytic residue.

Belongs to the GHMP kinase family. IspE subfamily. As to quaternary structure, homodimer.

It catalyses the reaction 4-CDP-2-C-methyl-D-erythritol + ATP = 4-CDP-2-C-methyl-D-erythritol 2-phosphate + ADP + H(+). Its pathway is isoprenoid biosynthesis; isopentenyl diphosphate biosynthesis via DXP pathway; isopentenyl diphosphate from 1-deoxy-D-xylulose 5-phosphate: step 3/6. In terms of biological role, catalyzes the phosphorylation of the position 2 hydroxy group of 4-diphosphocytidyl-2C-methyl-D-erythritol. This is 4-diphosphocytidyl-2-C-methyl-D-erythritol kinase from Escherichia coli O9:H4 (strain HS).